Here is a 487-residue protein sequence, read N- to C-terminus: MESPSIGDSLTARMIPRHSSLDSFGAMKVSLLVNLASIRVSKAELRQRVMLPQYLRIAIRDCILRKDDSFDASSSVAPPLENNALTPEVPLMVFVNPKSGGRQGPLIKERLQNLISEEQVYDLTEVKPNEFIRYGLGCLEAFASRGDECAKEIREKMRIVVAGGDGTVGWVLGCLGELNLQNRLPVPPVSIMPLGTGNDLSRSFGWGGSFPFAWKSAIKRTLHRASVAPISRLDSWNILITMPSGEIVDPPYSLKATQECYIDQNLEIEGEIPPSTNGYEGVFYNYFSIGMDAQVAYGFHHLRNEKPYLANGPIANKIIYSGYGCSQGWFLTHCINDPGLRGLKNIMTLHIKKLDSSEWEKVPVPKSVRAVVALNLHSYGSGRNPWGNLKQDYLEKRGFVEAQADDGLLEIFGLKQGWHASFVMVELISAKHIAQAAAIRLEIRGGDWKDAFMQMDGEPWKQPMTRDYSTFVDIKRVPHQSLVVKGD.

In terms of domain architecture, DAGKc spans 86–242 (TPEVPLMVFV…LDSWNILITM (157 aa)).

Belongs to the eukaryotic diacylglycerol kinase family. Monomer. In terms of tissue distribution, highly expressed in pollen grains. Expressed in roots, hypocotyls, leaf vasculature, developing anthers and stigmas, and receptacles of siliques.

It is found in the endoplasmic reticulum. Its subcellular location is the cytoplasm. It localises to the cytosol. The catalysed reaction is a 1,2-diacyl-sn-glycerol + ATP = a 1,2-diacyl-sn-glycero-3-phosphate + ADP + H(+). Functionally, phosphorylates the second messenger diacylglycerol (DAG) to generate phosphatidic acid (PA), another important signaling molecule. PA is required for plant development and responses to abiotic stress and pathogen attack. May be involved in the accumulation of PA during cold stress. Involved in the regulation of PA and phosphatidylcholine biosynthesis in growing pollen tubes. Required for nitric oxide-dependent pollen tube growth and re-orientation responses. Functions together with DGK2 in male gametophyte development and biosynthesis of phosphatidylglycerol and phosphatidylinositol in the endoplasmic reticulum (ER). Involved in PA production for pollen grain growth, as well as leaf and root growth. Possesses guanylyl cyclase activity in vitro. This is Diacylglycerol kinase 4 from Arabidopsis thaliana (Mouse-ear cress).